The primary structure comprises 717 residues: Radial spoke head protein 6 homolog A (717 aa).

Disordered stretches follow at residues 1-65, 503-523, 563-588, and 672-717; these read MGDL…SLSQ, SEEE…YEEN, TEEE…QEVG, and GPEI…ETDD. Composition is skewed to acidic residues over residues 503–513, 564–585, and 700–717; these read SEEEGDEEEEG, EEEE…EVEQ, and TEEE…ETDD.

The protein belongs to the flagellar radial spoke RSP4/6 family. As to quaternary structure, component of the axonemal radial spoke 1 (RS1) and 2 (RS2) complexes, at least composed of spoke head proteins RSPH1, RSPH3, RSPH9 and the cilia-specific component RSPH4A or sperm-specific component RSPH6A, spoke stalk proteins RSPH14, DNAJB13, DYDC1, ROPN1L and NME5, and the RS1 complex-specific anchor protein IQUB. Interacts with RSPH1. Interacts with RSPH3B. Interacts with RSPH4A. Interacts with RSPH9. Interacts with RSPH10B. Phosphorylated by PKA. Phosphorylation increases in capacitated sperm.

The protein resides in the cytoplasm. Its subcellular location is the cytoskeleton. The protein localises to the flagellum axoneme. Functionally, functions as part of radial spoke complexes in the axoneme of sperm flagella that play an important part in motility. The triple radial spokes (RS1, RS2 and RS3) are required to modulate beating of the sperm flagellum. This Homo sapiens (Human) protein is Radial spoke head protein 6 homolog A.